Consider the following 337-residue polypeptide: GTP 3',8-cyclase (337 aa).

One can recognise a Radical SAM core domain in the interval 17-243 (PFQRQYYYLR…HKSHTDGPAK (227 aa)). A GTP-binding site is contributed by R26. 2 residues coordinate [4Fe-4S] cluster: C33 and C37. Y39 serves as a coordination point for S-adenosyl-L-methionine. [4Fe-4S] cluster is bound at residue C40. Position 76 (R76) interacts with GTP. G80 is an S-adenosyl-L-methionine binding site. Residue T107 coordinates GTP. Position 131 (S131) interacts with S-adenosyl-L-methionine. K168 provides a ligand contact to GTP. Residue M202 coordinates S-adenosyl-L-methionine. [4Fe-4S] cluster is bound by residues C265 and C268. Residue 270 to 272 (RLR) participates in GTP binding. C282 lines the [4Fe-4S] cluster pocket.

Belongs to the radical SAM superfamily. MoaA family. In terms of assembly, monomer and homodimer. [4Fe-4S] cluster is required as a cofactor.

The catalysed reaction is GTP + AH2 + S-adenosyl-L-methionine = (8S)-3',8-cyclo-7,8-dihydroguanosine 5'-triphosphate + 5'-deoxyadenosine + L-methionine + A + H(+). The protein operates within cofactor biosynthesis; molybdopterin biosynthesis. Catalyzes the cyclization of GTP to (8S)-3',8-cyclo-7,8-dihydroguanosine 5'-triphosphate. The protein is GTP 3',8-cyclase of Haemophilus influenzae (strain ATCC 51907 / DSM 11121 / KW20 / Rd).